Here is a 357-residue protein sequence, read N- to C-terminus: D(4) dopamine receptor (357 aa).

Residues 1 to 32 are Extracellular-facing; the sequence is MGNRSAADADGLLAGRGPGTGGGAGSPGAAAA. Asn3 is a glycosylation site (N-linked (GlcNAc...) asparagine). The helical transmembrane segment at 33–55 threads the bilayer; the sequence is LVGGVLLIGAVLAGNALVCVSVA. The Cytoplasmic portion of the chain corresponds to 56-65; the sequence is AERALQTPTN. Residues 66 to 88 traverse the membrane as a helical segment; sequence YFIVSLAAADLLLALLVLPLFVY. Asp75 lines the Na(+) pocket. Over 89 to 104 the chain is Extracellular; that stretch reads SEVQGGVWQFSPGLCD. An intrachain disulfide couples Cys103 to Cys180. Residues 105 to 126 traverse the membrane as a helical segment; that stretch reads ALMAMDVMLCTASIFNLCAISA. Ser117 contacts Na(+). The Cytoplasmic portion of the chain corresponds to 127 to 146; the sequence is DRFVAVAVPLSYNRQSGGGR. Residues 147-170 form a helical membrane-spanning segment; it reads QLLLIGATWLLSAAVAAPVLCGLN. Residues 171 to 186 are Extracellular-facing; it reads DARGRDPAVCRLEDRD. The helical transmembrane segment at 187 to 208 threads the bilayer; that stretch reads YVVYSSVCSFFLPCPVMLLLYW. The Cytoplasmic portion of the chain corresponds to 209–284; that stretch reads ATFRGLRRWE…ITGRERKAMR (76 aa). The segment at 225-261 is disordered; the sequence is LHGRRPRRPSGPGPPPPEAVETPEAPEAIPTPDATLA. Over residues 233–242 the composition is skewed to pro residues; the sequence is PSGPGPPPPE. Low complexity predominate over residues 243–259; sequence AVETPEAPEAIPTPDAT. A helical membrane pass occupies residues 285 to 307; the sequence is VLPVVVGAFLVCWTPFFVVHITG. Residues 308–316 lie on the Extracellular side of the membrane; sequence ALCPACAVP. A disulfide bridge connects residues Cys310 and Cys313. The chain crosses the membrane as a helical span at residues 317 to 339; sequence PRLVSAVTWLGYVNSALNPLIYT. The Cytoplasmic portion of the chain corresponds to 340 to 357; sequence VFNAEFRAVFRKALRLCC. Cys357 carries the S-palmitoyl cysteine lipid modification.

It belongs to the G-protein coupled receptor 1 family. As to quaternary structure, forms homo- and heterooligomers with DRD2. D4.7 allele exhibits higher affinity for homodimers compared to DRD2 heterodimers, while alleles D42. and 4.4 have similar affinities for both. The interaction with DRD2 may modulate agonist-induced downstream signaling. Interacts with CLIC6. Interacts with GPRASP1. May interact with ADORA2A. Interacts with KLHL12. Polyubiquitinated by the BCR(KLHL12) E3 ubiquitin ligase complex: polyubiquitination does not lead to degradation of DRD4 protein. In terms of processing, palmitoylated. Palmitoylation of the C-terminal Cys is important for normal expression at the cell membrane.

It localises to the cell membrane. Dopamine receptor responsible for neuronal signaling in the mesolimbic system of the brain, an area of the brain that regulates emotion and complex behavior. Activated by dopamine, but also by epinephrine and norepinephrine, and by numerous synthetic agonists and drugs. Agonist binding triggers signaling via G proteins that inhibit adenylyl cyclase. Modulates the circadian rhythm of contrast sensitivity by regulating the rhythmic expression of NPAS2 in the retinal ganglion cells. This is D(4) dopamine receptor (DRD4) from Mustela putorius furo (European domestic ferret).